The primary structure comprises 464 residues: Trigger factor (464 aa).

Residues 162–243 (GDFISIDLSA…VGTVKERELP (82 aa)) enclose the PPIase FKBP-type domain. Residues 428–464 (GASVDTAELFGNGEADTEEAASTDEVASDSAEGEDQK) are disordered.

The protein belongs to the FKBP-type PPIase family. Tig subfamily.

It is found in the cytoplasm. The catalysed reaction is [protein]-peptidylproline (omega=180) = [protein]-peptidylproline (omega=0). In terms of biological role, involved in protein export. Acts as a chaperone by maintaining the newly synthesized protein in an open conformation. Functions as a peptidyl-prolyl cis-trans isomerase. The chain is Trigger factor from Rhodococcus opacus (strain B4).